The chain runs to 286 residues: UDP-3-O-acyl-N-acetylglucosamine deacetylase (286 aa).

The Zn(2+) site is built by His79, His237, and Asp241. His264 (proton donor) is an active-site residue.

This sequence belongs to the LpxC family. The cofactor is Zn(2+).

The catalysed reaction is a UDP-3-O-[(3R)-3-hydroxyacyl]-N-acetyl-alpha-D-glucosamine + H2O = a UDP-3-O-[(3R)-3-hydroxyacyl]-alpha-D-glucosamine + acetate. The protein operates within glycolipid biosynthesis; lipid IV(A) biosynthesis; lipid IV(A) from (3R)-3-hydroxytetradecanoyl-[acyl-carrier-protein] and UDP-N-acetyl-alpha-D-glucosamine: step 2/6. Its function is as follows. Catalyzes the hydrolysis of UDP-3-O-myristoyl-N-acetylglucosamine to form UDP-3-O-myristoylglucosamine and acetate, the committed step in lipid A biosynthesis. The protein is UDP-3-O-acyl-N-acetylglucosamine deacetylase of Chlamydia trachomatis serovar L2 (strain ATCC VR-902B / DSM 19102 / 434/Bu).